The chain runs to 463 residues: Thiamine-repressible acid phosphatase SPBC21H7.03c (463 aa).

The N-terminal stretch at 1–18 (MQLCIISLWFLAAFIVNA) is a signal peptide. Residue His69 is the Nucleophile of the active site. 4 N-linked (GlcNAc...) asparagine glycosylation sites follow: Asn98, Asn104, Asn221, and Asn324. Catalysis depends on Asp341, which acts as the Proton donor. Asn439 and Asn458 each carry an N-linked (GlcNAc...) asparagine glycan.

It belongs to the histidine acid phosphatase family.

It localises to the secreted. The protein resides in the cell wall. It catalyses the reaction a phosphate monoester + H2O = an alcohol + phosphate. Functionally, may dephosphorylate thiamine phosphates. In Schizosaccharomyces pombe (strain 972 / ATCC 24843) (Fission yeast), this protein is Thiamine-repressible acid phosphatase SPBC21H7.03c.